A 271-amino-acid polypeptide reads, in one-letter code: tRNA (guanine-N(7)-)-methyltransferase (271 aa).

Positions 95, 120, 147, and 175 each coordinate S-adenosyl-L-methionine. Residue Asp-175 is part of the active site. Residues Lys-179, Asp-211, and 249-252 (THFE) each bind substrate.

This sequence belongs to the class I-like SAM-binding methyltransferase superfamily. TrmB family.

It catalyses the reaction guanosine(46) in tRNA + S-adenosyl-L-methionine = N(7)-methylguanosine(46) in tRNA + S-adenosyl-L-homocysteine. It participates in tRNA modification; N(7)-methylguanine-tRNA biosynthesis. In terms of biological role, catalyzes the formation of N(7)-methylguanine at position 46 (m7G46) in tRNA. This chain is tRNA (guanine-N(7)-)-methyltransferase, found in Rhodopirellula baltica (strain DSM 10527 / NCIMB 13988 / SH1).